The sequence spans 143 residues: MAREFSRTRRIAQQLQQELAQVLQRDMKDPRIGFVTVNDVDVSRDLSYAKVYVTFFEEDEKLVQEKVEALDAAAGYIRSLVAGRMKLRVMPELRFIYDSSLVEGMRMSNLVSRVISDDEAKQKQHGDQQDVSQSSDDKSEGED.

Residues Ser116 to Gln128 are compositionally biased toward basic and acidic residues. A disordered region spans residues Ser116 to Asp143.

The protein belongs to the RbfA family. Monomer. Binds 30S ribosomal subunits, but not 50S ribosomal subunits or 70S ribosomes.

The protein localises to the cytoplasm. Its function is as follows. One of several proteins that assist in the late maturation steps of the functional core of the 30S ribosomal subunit. Associates with free 30S ribosomal subunits (but not with 30S subunits that are part of 70S ribosomes or polysomes). Required for efficient processing of 16S rRNA. May interact with the 5'-terminal helix region of 16S rRNA. The chain is Ribosome-binding factor A from Shewanella sediminis (strain HAW-EB3).